Here is a 384-residue protein sequence, read N- to C-terminus: MSIAVFIDGTDAQQVTELKKFLKSYGAKVLDNTECSDANWPDELIKCIKFLNVCWKDESIAESDAKDVLTSVASMFIQLPPNKLIEAVPLFCEKLLDFSGDNIRRHKNKLFPLNLLFWGLNPKSHPRYEIFLTLIECAEKMGVLNEVITDPKKVASWLSECDCTVEECQKVWQKLYDAHIALGENRKAIEAMIYLLSTYNEVTAVNARQNAIKCIISVLQDPCLLSHDQLYALKPVQYLEGEPVHDFFKIFVSGDLNTFKNFLAKHPNFLSHNNLSEEACVHKLRLLTLMQLSENVNELSYHEAATQLGLKIEELEPFIIEAVRQRAVACKLDQVQKKILITGAFPRTFGRPQWINLHDTLVQWRSHLGTVQSSLSMMIQNESS.

Positions 184 to 346 constitute a PCI domain; that stretch reads ENRKAIEAMI…KKILITGAFP (163 aa).

It belongs to the eIF-3 subunit M family. As to quaternary structure, component of the eukaryotic translation initiation factor 3 (eIF-3) complex.

The protein localises to the cytoplasm. Its function is as follows. Component of the eukaryotic translation initiation factor 3 (eIF-3) complex, which is involved in protein synthesis of a specialized repertoire of mRNAs and, together with other initiation factors, stimulates binding of mRNA and methionyl-tRNAi to the 40S ribosome. The eIF-3 complex specifically targets and initiates translation of a subset of mRNAs involved in cell proliferation. This is Eukaryotic translation initiation factor 3 subunit M from Schistosoma japonicum (Blood fluke).